The following is a 348-amino-acid chain: MQLSDFNYELPAALIAQHPLANRTDSRLLEVKADGLNHALLLDRQFKDILSLVKPGDLLVFNNTKVIPARLHGKKETGGIVELLIERISGEKQTWVQIRASKVLKTGSIVHIHNHAGETFSVEIIGYDGRFYEVSFPDNVFSLLERFGELPLPPYIEHQPDGEDAQRYQTVVAKNPGAVAAPTAGLHFDEAILQKIKNLGVNQATVTLHVGAGTFTPVREEDLSKHKMHYEWFSIPNETLQAIEATKENGGRVIAVGTTSLRALESQAASGQSGGETNLFITPGYQFKTVDCLLTNFHLPKSTLLMLVSAFAGMDHIRAAYQHAIEQKYRFFSYGDAMFLCRLENTKP.

The protein belongs to the QueA family. As to quaternary structure, monomer.

It localises to the cytoplasm. It catalyses the reaction 7-aminomethyl-7-carbaguanosine(34) in tRNA + S-adenosyl-L-methionine = epoxyqueuosine(34) in tRNA + adenine + L-methionine + 2 H(+). The protein operates within tRNA modification; tRNA-queuosine biosynthesis. Transfers and isomerizes the ribose moiety from AdoMet to the 7-aminomethyl group of 7-deazaguanine (preQ1-tRNA) to give epoxyqueuosine (oQ-tRNA). In Polynucleobacter necessarius subsp. necessarius (strain STIR1), this protein is S-adenosylmethionine:tRNA ribosyltransferase-isomerase.